A 260-amino-acid chain; its full sequence is 3-deoxy-manno-octulosonate cytidylyltransferase (260 aa).

This sequence belongs to the KdsB family.

The protein localises to the cytoplasm. It catalyses the reaction 3-deoxy-alpha-D-manno-oct-2-ulosonate + CTP = CMP-3-deoxy-beta-D-manno-octulosonate + diphosphate. It functions in the pathway nucleotide-sugar biosynthesis; CMP-3-deoxy-D-manno-octulosonate biosynthesis; CMP-3-deoxy-D-manno-octulosonate from 3-deoxy-D-manno-octulosonate and CTP: step 1/1. The protein operates within bacterial outer membrane biogenesis; lipopolysaccharide biosynthesis. Its function is as follows. Activates KDO (a required 8-carbon sugar) for incorporation into bacterial lipopolysaccharide in Gram-negative bacteria. The chain is 3-deoxy-manno-octulosonate cytidylyltransferase from Polaromonas naphthalenivorans (strain CJ2).